The primary structure comprises 2097 residues: SCAR-like protein 1 (2097 aa).

7 disordered regions span residues 205 to 227 (IANS…PRTT), 544 to 565 (AHSS…SIES), 1443 to 1467 (SQIA…PLSS), 1588 to 1616 (STEE…DPQK), 1730 to 1802 (QERV…EKTV), 1820 to 1842 (ASSH…PVTS), and 1893 to 1944 (YEGP…EGGY). The span at 549–562 (KQSSQKSSGLDGSS) shows a compositional bias: low complexity. The segment covering 1443–1454 (SQIASCSPTPSN) has biased composition (polar residues). The span at 1766 to 1794 (SISQQGLQGSVFPSDTSDNGEHSSYTSRA) shows a compositional bias: polar residues. Basic and acidic residues predominate over residues 1908–1922 (YPHDDHNSEKEDIHQ). Positions 2028–2046 (ERNLLLEQIRNKTFNLKPV) constitute a WH2 domain.

It belongs to the SCAR/WAVE family.

Its subcellular location is the cytoplasm. It localises to the cytoskeleton. Involved in regulation of actin and microtubule organization. Part of a WAVE complex that activates the Arp2/3 complex. The sequence is that of SCAR-like protein 1 from Oryza sativa subsp. japonica (Rice).